The primary structure comprises 371 residues: Ligninase LG2 (371 aa).

An N-terminal signal peptide occupies residues 1 to 21 (MAFKQLFAAITVALSLTAANA). The propeptide occupies 22-28 (AVVKEKR). Intrachain disulfides connect C31–C43, C42–C313, C62–C148, and C277–C345. Residue H75 is the Proton acceptor of the active site. Ca(2+) is bound by residues D76, G94, D96, and S98. W199 carries the 3-hydroxytryptophan modification. H204 provides a ligand contact to heme b. Residues S205, D222, T224, I227, and D229 each contribute to the Ca(2+) site. An N-linked (GlcNAc...) asparagine glycan is attached at N285.

This sequence belongs to the peroxidase family. Ligninase subfamily. It depends on Ca(2+) as a cofactor. Requires heme b as cofactor.

The catalysed reaction is 1-(3,4-dimethoxyphenyl)-2-(2-methoxyphenoxy)propane-1,3-diol + H2O2 = 3,4-dimethoxybenzaldehyde + guaiacol + glycolaldehyde + H2O. The enzyme catalyses 2 (3,4-dimethoxyphenyl)methanol + H2O2 = 2 (3,4-dimethoxyphenyl)methanol radical + 2 H2O. It participates in secondary metabolite metabolism; lignin degradation. In terms of biological role, depolymerization of lignin. Catalyzes the C(alpha)-C(beta) cleavage of the propyl side chains of lignin. The sequence is that of Ligninase LG2 (GLG2) from Phanerodontia chrysosporium (White-rot fungus).